A 323-amino-acid chain; its full sequence is Probable pectate lyase A (323 aa).

An N-terminal signal peptide occupies residues 1–20; it reads MTNFKWIVAAAGLLSGQVLA. A glycan (N-linked (GlcNAc...) asparagine) is linked at N95. Positions 136, 165, and 169 each coordinate Ca(2+). R222 is a catalytic residue.

It belongs to the polysaccharide lyase 1 family. It depends on Ca(2+) as a cofactor.

It is found in the secreted. The catalysed reaction is Eliminative cleavage of (1-&gt;4)-alpha-D-galacturonan to give oligosaccharides with 4-deoxy-alpha-D-galact-4-enuronosyl groups at their non-reducing ends.. Functionally, pectinolytic enzyme consist of four classes of enzymes: pectin lyase, polygalacturonase, pectin methylesterase and rhamnogalacturonase. Among pectinolytic enzymes, pectin lyase is the most important in depolymerization of pectin, since it cleaves internal glycosidic bonds of highly methylated pectins. Favors pectate, the anion, over pectin, the methyl ester. This is Probable pectate lyase A (plyA) from Aspergillus niger (strain ATCC MYA-4892 / CBS 513.88 / FGSC A1513).